Reading from the N-terminus, the 394-residue chain is Tubby-like F-box protein 2 (394 aa).

Positions 21–44 (SKRSWSKSSHIAPDQTTPPLDNIP) are disordered. Residues 26 to 44 (SKSSHIAPDQTTPPLDNIP) show a composition bias toward polar residues. Residues 46-101 (SPWASLPPELLHDIIWRVEESETAWPARAAVVSCASVCKSWRGITMEIVRIPEQCG) enclose the F-box domain. 2 disordered regions span residues 200–225 (ASSTAQAQPNRRLHPKQAAPKLPTNS) and 268–297 (IEEEVSSSPSPKGETITTDKEIPDNSPSLR).

It belongs to the TUB family. In terms of tissue distribution, ubiquitous.

In Arabidopsis thaliana (Mouse-ear cress), this protein is Tubby-like F-box protein 2.